A 649-amino-acid chain; its full sequence is Macrolide export ATP-binding/permease protein MacB (649 aa).

Residues Ile-7–Leu-245 form the ABC transporter domain. Gly-43–Ser-50 serves as a coordination point for ATP. Helical transmembrane passes span Leu-276–Gly-296, Ile-529–Val-549, Leu-582–Phe-602, and Phe-612–Phe-632.

This sequence belongs to the ABC transporter superfamily. Macrolide exporter (TC 3.A.1.122) family. Homodimer. Part of the tripartite efflux system MacAB-TolC, which is composed of an inner membrane transporter, MacB, a periplasmic membrane fusion protein, MacA, and an outer membrane component, TolC. The complex forms a large protein conduit and can translocate molecules across both the inner and outer membranes. Interacts with MacA.

The protein resides in the cell inner membrane. Part of the tripartite efflux system MacAB-TolC. MacB is a non-canonical ABC transporter that contains transmembrane domains (TMD), which form a pore in the inner membrane, and an ATP-binding domain (NBD), which is responsible for energy generation. Confers resistance against macrolides. This is Macrolide export ATP-binding/permease protein MacB from Pasteurella multocida (strain Pm70).